The following is a 366-amino-acid chain: D-alanine--D-alanine ligase (366 aa).

The ATP-grasp domain maps to Lys-146–Glu-352. ATP is bound at residue Glu-179–Glu-234. Residues Asp-305, Glu-319, and Asn-321 each coordinate Mg(2+).

The protein belongs to the D-alanine--D-alanine ligase family. Mg(2+) serves as cofactor. It depends on Mn(2+) as a cofactor.

It is found in the cytoplasm. The enzyme catalyses 2 D-alanine + ATP = D-alanyl-D-alanine + ADP + phosphate + H(+). The protein operates within cell wall biogenesis; peptidoglycan biosynthesis. Functionally, cell wall formation. The protein is D-alanine--D-alanine ligase of Chloroherpeton thalassium (strain ATCC 35110 / GB-78).